The chain runs to 155 residues: Small ribosomal subunit protein uS7 (155 aa).

Belongs to the universal ribosomal protein uS7 family. Part of the 30S ribosomal subunit. Contacts proteins S9 and S11.

Its function is as follows. One of the primary rRNA binding proteins, it binds directly to 16S rRNA where it nucleates assembly of the head domain of the 30S subunit. Is located at the subunit interface close to the decoding center, probably blocks exit of the E-site tRNA. The sequence is that of Small ribosomal subunit protein uS7 from Pelodictyon phaeoclathratiforme (strain DSM 5477 / BU-1).